We begin with the raw amino-acid sequence, 319 residues long: Forkhead box protein B1 (319 aa).

A DNA-binding region (fork-head) is located at residues K13–K107. The interval L278–S310 is disordered. Residues S279–T305 are compositionally biased toward low complexity.

In early gastrulae, expressed in the inner layer of the posterior dorsal ectoderm and in non-involuted mesoderm. By the mid-gastrula stage, expressed solely in the posterior ectoderm. At the end of gastrulation, expressed in ectodermal regions fated to become diencephalon, midbrain and hindbrain, and weakly expressed in regions fated to become spinal cord and tailbud. At the neurula stage, expressed in the midbrain and posterior forebrain (diencephalon) but not in the more anterior forebrain (telencephalon). Also expressed posteriorly in rhombomere 5. At tailbud stages, expression remains in the anterior brain and is also detectable along the length of the central nervous system and in the tailbud.

It is found in the nucleus. Its function is as follows. Probable transcription factor. May be involved in the early anteroposterior patterning of the neuroectoderm. This is Forkhead box protein B1 from Xenopus laevis (African clawed frog).